The following is a 499-amino-acid chain: Glycerol kinase (499 aa).

Thr-12 provides a ligand contact to ADP. The ATP site is built by Thr-12, Thr-13, and Ser-14. Residue Thr-12 coordinates sn-glycerol 3-phosphate. Residue Arg-16 coordinates ADP. Residues Arg-82, Glu-83, Tyr-134, and Asp-243 each coordinate sn-glycerol 3-phosphate. Glycerol-binding residues include Arg-82, Glu-83, Tyr-134, Asp-243, and Gln-244. The ADP site is built by Thr-265 and Gly-308. ATP contacts are provided by Thr-265, Gly-308, Gln-312, and Gly-409. ADP is bound by residues Gly-409 and Asn-413.

Belongs to the FGGY kinase family. As to quaternary structure, homotetramer and homodimer (in equilibrium).

The enzyme catalyses glycerol + ATP = sn-glycerol 3-phosphate + ADP + H(+). The protein operates within polyol metabolism; glycerol degradation via glycerol kinase pathway; sn-glycerol 3-phosphate from glycerol: step 1/1. With respect to regulation, activated by phosphorylation and inhibited by fructose 1,6-bisphosphate (FBP). In terms of biological role, key enzyme in the regulation of glycerol uptake and metabolism. Catalyzes the phosphorylation of glycerol to yield sn-glycerol 3-phosphate. In Lachnoclostridium phytofermentans (strain ATCC 700394 / DSM 18823 / ISDg) (Clostridium phytofermentans), this protein is Glycerol kinase.